Reading from the N-terminus, the 354-residue chain is uncharacterized protein (354 aa).

Belongs to the band 7/mec-2 family.

It localises to the mitochondrion. This is an uncharacterized protein from Schizosaccharomyces pombe (strain 972 / ATCC 24843) (Fission yeast).